Reading from the N-terminus, the 300-residue chain is GTPase Era (300 aa).

The 169-residue stretch at 8 to 176 (RCGYVAIVGR…EGLIAKHLPE (169 aa)) folds into the Era-type G domain. Residues 16 to 23 (GRPNVGKS) form a G1 region. 16–23 (GRPNVGKS) provides a ligand contact to GTP. Positions 42–46 (QTTRH) are G2. Positions 63–66 (DTPG) are G3. GTP is bound by residues 63–67 (DTPGM) and 125–128 (NKTD). A G4 region spans residues 125–128 (NKTD). The segment at 155 to 157 (VSA) is G5. Positions 199–283 (VREKIMRQLG…MLNLWVKVKG (85 aa)) constitute a KH type-2 domain.

This sequence belongs to the TRAFAC class TrmE-Era-EngA-EngB-Septin-like GTPase superfamily. Era GTPase family. As to quaternary structure, monomer.

The protein localises to the cytoplasm. It is found in the cell inner membrane. Functionally, an essential GTPase that binds both GDP and GTP, with rapid nucleotide exchange. Plays a role in 16S rRNA processing and 30S ribosomal subunit biogenesis and possibly also in cell cycle regulation and energy metabolism. The polypeptide is GTPase Era (Pseudomonas fluorescens (strain ATCC BAA-477 / NRRL B-23932 / Pf-5)).